The primary structure comprises 298 residues: Probable GTP 3',8-cyclase (298 aa).

The region spanning 4-227 is the Radical SAM core domain; that stretch reads RYGREIRSFR…MQNRKKYVID (224 aa). Residue arginine 13 participates in GTP binding. [4Fe-4S] cluster-binding residues include cysteine 20 and cysteine 24. Tyrosine 26 is an S-adenosyl-L-methionine binding site. Position 27 (cysteine 27) interacts with [4Fe-4S] cluster. Lysine 61 contributes to the GTP binding site. Residue glycine 65 coordinates S-adenosyl-L-methionine. Threonine 91 is a GTP binding site. Serine 115 is a binding site for S-adenosyl-L-methionine. Lysine 152 lines the GTP pocket. [4Fe-4S] cluster-binding residues include cysteine 243 and cysteine 246. 248 to 250 contacts GTP; the sequence is RIR. Position 260 (cysteine 260) interacts with [4Fe-4S] cluster.

This sequence belongs to the radical SAM superfamily. MoaA family. [4Fe-4S] cluster is required as a cofactor.

The catalysed reaction is GTP + AH2 + S-adenosyl-L-methionine = (8S)-3',8-cyclo-7,8-dihydroguanosine 5'-triphosphate + 5'-deoxyadenosine + L-methionine + A + H(+). Its pathway is cofactor biosynthesis; molybdopterin biosynthesis. Functionally, catalyzes the cyclization of GTP to (8S)-3',8-cyclo-7,8-dihydroguanosine 5'-triphosphate. The protein is Probable GTP 3',8-cyclase of Methanococcus maripaludis (strain C6 / ATCC BAA-1332).